Consider the following 173-residue polypeptide: Lens fiber membrane intrinsic protein (173 aa).

Over 1–3 the chain is Cytoplasmic; sequence MYS. Residues 4-24 form a helical membrane-spanning segment; it reads FMGGGLFCAWVGTILLVVATA. Residues 25–66 are Extracellular-facing; the sequence is TDHWMQYRLSGSFAHQGLWRYCLGNKCFLQTESIAYWNATRA. C-linked (Man) tryptophan glycans are attached at residues tryptophan 43 and tryptophan 61. Residue asparagine 62 is glycosylated (N-linked (GlcNAc...) asparagine). A helical transmembrane segment spans residues 67 to 87; it reads FMILSALCATSGIIMGVLAFA. Topologically, residues 88-98 are cytoplasmic; sequence QQSTFTRLSRP. Residues 99–119 form a helical membrane-spanning segment; the sequence is FSAGIMFFASTLFVLLALAIY. Residues 120 to 140 are Extracellular-facing; that stretch reads TGVTVSFLGRRFGDWRFSWSY. The chain crosses the membrane as a helical span at residues 141 to 161; it reads ILGWVALLMTFFAGIFYMCAY. At 162–173 the chain is on the cytoplasmic side; that stretch reads RMHECRRLSTPR. Serine 170 carries the phosphoserine modification. At threonine 171 the chain carries Phosphothreonine.

This sequence belongs to the PMP-22/EMP/MP20 family. As to quaternary structure, seems to be associated with itself or another lens membrane component via disulfide bonds. As to expression, eye lens specific.

The protein localises to the membrane. Functionally, present in the thicker 16-17 nm junctions of mammalian lens fiber cells, where it may contribute to cell junctional organization. Acts as a receptor for calmodulin. May play an important role in both lens development and cataractogenesis. This chain is Lens fiber membrane intrinsic protein (Lim2), found in Rattus norvegicus (Rat).